The following is a 389-amino-acid chain: Heat-inducible transcription repressor HrcA (389 aa).

This sequence belongs to the HrcA family.

Its function is as follows. Negative regulator of class I heat shock genes (grpE-dnaK-dnaJ and groELS operons). Prevents heat-shock induction of these operons. The protein is Heat-inducible transcription repressor HrcA of Synechococcus sp. (strain JA-2-3B'a(2-13)) (Cyanobacteria bacterium Yellowstone B-Prime).